The sequence spans 310 residues: Olfactory receptor 2A7 (310 aa).

Residues 1–24 (MGDNITSITEFLLLGFPVGPRIQM) are Extracellular-facing. The N-linked (GlcNAc...) asparagine glycan is linked to Asn4. Residues 25 to 48 (LLFGLFSLFYVFTLLGNGTILGLI) form a helical membrane-spanning segment. At 49 to 56 (SLDSRLHA) the chain is on the cytoplasmic side. A helical transmembrane segment spans residues 57–78 (PMYFFLSHLAVVDIAYACNTVP). The Extracellular portion of the chain corresponds to 79 to 99 (RMLVNLLHPAKPISFAGRMMQ). The helical transmembrane segment at 100 to 119 (TFLFSTFAVTECLLLVVMSY) threads the bilayer. Residues 120 to 138 (DLYVAICHPLRYLAIMTWR) lie on the Cytoplasmic side of the membrane. The helical transmembrane segment at 139–157 (VCITLAVTSWTTGVLLSLI) threads the bilayer. The Extracellular portion of the chain corresponds to 158 to 194 (HLVLLLPLPFCRPQKIYHFFCEILAVLKLACADTHIN). A helical membrane pass occupies residues 195–218 (ENMVLAGAISGLVGPLSTIVVSYM). Over 219-235 (CILCAILQIQSREVQRK) the chain is Cytoplasmic. The helical transmembrane segment at 236–258 (AFCTCFSHLCVIGLFYGTAIIMY) threads the bilayer. Topologically, residues 259–271 (VGPRYGNPKEQKK) are extracellular. The helical transmembrane segment at 272-291 (YLLLFHSLFNPMLNPLICSL) threads the bilayer. The Cytoplasmic segment spans residues 292 to 310 (RNSEVKNTLKRVLGVERAL).

This sequence belongs to the G-protein coupled receptor 1 family.

The protein resides in the cell membrane. In terms of biological role, odorant receptor. This chain is Olfactory receptor 2A7 (OR2A7), found in Homo sapiens (Human).